The chain runs to 1037 residues: Sentrin-specific protease 7 (1037 aa).

Residues 1–10 (MDRARPGRRR) are compositionally biased toward basic residues. 2 disordered regions span residues 1–28 (MDRA…SPAD) and 182–420 (ASLS…SEEN). Phosphoserine is present on residues S12, S13, S25, and S189. 2 stretches are compositionally biased toward polar residues: residues 182–211 (ASLS…NVNH) and 253–263 (TPQSKDFNSGN). The span at 289 to 299 (VSRKRKKRGRS) shows a compositional bias: basic residues. Residues 300-309 (NFHNSHNPKS) show a composition bias toward polar residues. Basic and acidic residues-rich tracts occupy residues 310–320 (SVDKSTEYIKE) and 330–340 (KLEESNEDSHQ). Positions 381-399 (NKSSESSVSSEVAENSSAA) are enriched in low complexity. Residues S432 and S433 each carry the phosphoserine modification. The protease stretch occupies residues 747 to 1037 (LGVTNEDLEC…HLQQQKGSSS (291 aa)). H847 is a catalytic residue. The tract at residues 873–910 (EFQDQQSQHDNKTIDNDPHTTSTVFTSAEESQSTETSM) is disordered. Over residues 879 to 890 (SQHDNKTIDNDP) the composition is skewed to basic and acidic residues. Residues 898–910 (TSAEESQSTETSM) are compositionally biased toward low complexity. Residue D926 is part of the active site. C979 functions as the Nucleophile in the catalytic mechanism.

This sequence belongs to the peptidase C48 family.

The protein resides in the cytoplasm. In terms of biological role, protease that acts as a positive regulator of the cGAS-STING pathway by catalyzing desumoylation of CGAS. Desumoylation of CGAS promotes DNA-binding activity of CGAS, subsequent oligomerization and activation. Deconjugates SUMO2 and SUMO3 from targeted proteins, but not SUMO1. Catalyzes the deconjugation of poly-SUMO2 and poly-SUMO3 chains. Has very low efficiency in processing full-length SUMO proteins to their mature forms. The protein is Sentrin-specific protease 7 (Senp7) of Rattus norvegicus (Rat).